We begin with the raw amino-acid sequence, 2193 residues long: Genome polyprotein (2193 aa).

A disordered region spans residues 1–23 (MGSQVSTQRSGSHENSNSASEGS). Gly-2 carries N-myristoyl glycine; by host lipidation. The Cytoplasmic segment spans residues 2–1503 (GSQVSTQRSG…HLNRAVLVMQ (1502 aa)). The segment at 566-588 (GDPIADMIDQTVNNQVNRSLTAL) is amphipathic alpha-helix. Catalysis depends on for protease 2A activity residues His-883 and Asp-901. 2 residues coordinate Zn(2+): Cys-918 and Cys-920. Cys-972 functions as the For protease 2A activity in the catalytic mechanism. Cys-978 and His-980 together coordinate Zn(2+). A membrane-binding region spans residues 1112–1184 (SASWLKKFND…EQSAASQEDL (73 aa)). The oligomerization stretch occupies residues 1112–1250 (SASWLKKFND…SPGTGKSLAT (139 aa)). The RNA-binding stretch occupies residues 1133 to 1137 (SSKIS). The 159-residue stretch at 1216-1374 (EKRMNNYMQF…YKTDLGRLDA (159 aa)) folds into the SF3 helicase domain. 1240 to 1247 (GSPGTGKS) contacts ATP. Residues Cys-1381, Cys-1392, and Cys-1397 each contribute to the Zn(2+) site. The C4-type; degenerate zinc-finger motif lies at 1381–1397 (CTENNTANFKRCSPLVC). The RNA-binding stretch occupies residues 1424-1431 (EYNNRSAI). An oligomerization region spans residues 1435 to 1440 (IEALFQ). An intramembrane segment occupies 1504-1519 (SIATVVAVVSLVYVIY). Residues 1520 to 2193 (KLFAGFQGAY…NLRRNWLELF (674 aa)) lie on the Cytoplasmic side of the membrane. An O-(5'-phospho-RNA)-tyrosine modification is found at Tyr-1529. Residues 1549-1727 (GPSLDFALSL…FCAGLKRGYF (179 aa)) enclose the Peptidase C3 domain. Residues His-1588, Glu-1619, and Cys-1695 each act as for protease 3C activity in the active site. Residues 1958–2074 (GSLFAFDYSG…SYPFPIDCSE (117 aa)) form the RdRp catalytic domain. Positions 1964 and 2060 each coordinate Mg(2+).

Belongs to the picornaviruses polyprotein family. Interacts with capsid protein VP1 and capsid protein VP3 to form heterotrimeric protomers. As to quaternary structure, interacts with capsid protein VP0, and capsid protein VP3 to form heterotrimeric protomers. Five protomers subsequently associate to form pentamers which serve as building blocks for the capsid. Interacts with capsid protein VP2, capsid protein VP3 and capsid protein VP4 following cleavage of capsid protein VP0. In terms of assembly, interacts with capsid protein VP1 and capsid protein VP3 in the mature capsid. Interacts with capsid protein VP0 and capsid protein VP1 to form heterotrimeric protomers. Five protomers subsequently associate to form pentamers which serve as building blocks for the capsid. Interacts with capsid protein VP4 in the mature capsid. Interacts with protein 2C; this interaction may be important for virion morphogenesis. As to quaternary structure, interacts with capsid protein VP1 and capsid protein VP3. In terms of assembly, homodimer. Homohexamer; forms a hexameric ring structure with 6-fold symmetry characteristic of AAA+ ATPases. Interacts (via N-terminus) with host RTN3 (via reticulon domain); this interaction is important for viral replication. Interacts with capsid protein VP3; this interaction may be important for virion morphogenesis. As to quaternary structure, interacts with protein 3CD. In terms of assembly, homodimer. Interacts with host GBF1. Interacts (via GOLD domain) with host ACBD3 (via GOLD domain); this interaction allows the formation of a viral protein 3A/ACBD3 heterotetramer with a 2:2 stoichiometry, which will stimulate the recruitment of host PI4KB in order to synthesize PI4P at the viral RNA replication sites. Interacts with RNA-directed RNA polymerase. As to quaternary structure, interacts with host IFIH1/MDA5; this interaction inhibits host IFIH1. In terms of assembly, protein 3CD: Interacts with protein 3AB and with RNA-directed RNA polymerase. Interacts with Viral protein genome-linked and with protein 3CD. Mg(2+) is required as a cofactor. Specific enzymatic cleavages in vivo by the viral proteases yield processing intermediates and the mature proteins. Post-translationally, myristoylation is required for the formation of pentamers during virus assembly. Further assembly of 12 pentamers and a molecule of genomic RNA generates the provirion. In terms of processing, during virion maturation, immature virions are rendered infectious following cleavage of VP0 into VP4 and VP2. This maturation seems to be an autocatalytic event triggered by the presence of RNA in the capsid and it is followed by a conformational change infectious virion. Myristoylation is required during RNA encapsidation and formation of the mature virus particle. Post-translationally, VPg is uridylylated by the polymerase into VPg-pUpU. This acts as a nucleotide-peptide primer for the genomic RNA replication.

Its subcellular location is the virion. It is found in the host cytoplasm. The protein localises to the host cytoplasmic vesicle membrane. It localises to the host nucleus. The catalysed reaction is a ribonucleoside 5'-triphosphate + H2O = a ribonucleoside 5'-diphosphate + phosphate + H(+). The enzyme catalyses Selective cleavage of Tyr-|-Gly bond in the picornavirus polyprotein.. It carries out the reaction RNA(n) + a ribonucleoside 5'-triphosphate = RNA(n+1) + diphosphate. It catalyses the reaction Selective cleavage of Gln-|-Gly bond in the poliovirus polyprotein. In other picornavirus reactions Glu may be substituted for Gln, and Ser or Thr for Gly.. With respect to regulation, replication or transcription is subject to high level of random mutations by the nucleotide analog ribavirin. Its function is as follows. Forms an icosahedral capsid of pseudo T=3 symmetry with capsid proteins VP2 and VP3. The capsid is 300 Angstroms in diameter, composed of 60 copies of each capsid protein and enclosing the viral positive strand RNA genome. Capsid protein VP1 mainly forms the vertices of the capsid. Capsid protein VP1 interacts with host cell receptor to provide virion attachment to target host cells. This attachment induces virion internalization. After binding to its receptor, the capsid undergoes conformational changes. Capsid protein VP1 N-terminus (that contains an amphipathic alpha-helix) and capsid protein VP4 are externalized. Together, they shape a pore in the host membrane through which viral genome is translocated to host cell cytoplasm. In terms of biological role, forms an icosahedral capsid of pseudo T=3 symmetry with capsid proteins VP2 and VP3. The capsid is 300 Angstroms in diameter, composed of 60 copies of each capsid protein and enclosing the viral positive strand RNA genome. Functionally, lies on the inner surface of the capsid shell. After binding to the host receptor, the capsid undergoes conformational changes. Capsid protein VP4 is released, Capsid protein VP1 N-terminus is externalized, and together, they shape a pore in the host membrane through which the viral genome is translocated into the host cell cytoplasm. Component of immature procapsids, which is cleaved into capsid proteins VP4 and VP2 after maturation. Allows the capsid to remain inactive before the maturation step. Its function is as follows. Cysteine protease that cleaves viral polyprotein and specific host proteins. It is responsible for the autocatalytic cleavage between the P1 and P2 regions, which is the first cleavage occurring in the polyprotein. Also cleaves the host translation initiation factor EIF4G1, in order to shut down the capped cellular mRNA translation. Inhibits the host nucleus-cytoplasm protein and RNA trafficking by cleaving host members of the nuclear pores. Counteracts stress granule formation probably by antagonizing its assembly or promoting its dissassembly. Cleaves and inhibits host IFIH1/MDA5, thereby inhibiting the type-I IFN production and the establishment of the antiviral state. Cleaves and inhibits host MAVS, thereby inhibiting the type-I IFN production and the establishment of the antiviral state. In terms of biological role, plays an essential role in the virus replication cycle by acting as a viroporin. Creates a pore in the host endoplasmic reticulum and as a consequence releases Ca2+ in the cytoplasm of infected cell. In turn, high levels of cytoplasmic calcium may trigger membrane trafficking and transport of viral ER-associated proteins to viroplasms, sites of viral genome replication. Functionally, induces and associates with structural rearrangements of intracellular membranes. Displays RNA-binding, nucleotide binding and NTPase activities. May play a role in virion morphogenesis and viral RNA encapsidation by interacting with the capsid protein VP3. Localizes the viral replication complex to the surface of membranous vesicles. Together with protein 3CD binds the Cis-Active RNA Element (CRE) which is involved in RNA synthesis initiation. Acts as a cofactor to stimulate the activity of 3D polymerase, maybe through a nucleid acid chaperone activity. Its function is as follows. Localizes the viral replication complex to the surface of membranous vesicles. It inhibits host cell endoplasmic reticulum-to-Golgi apparatus transport and causes the disassembly of the Golgi complex, possibly through GBF1 interaction. This would result in depletion of MHC, trail receptors and IFN receptors at the host cell surface. Plays an essential role in viral RNA replication by recruiting ACBD3 and PI4KB at the viral replication sites, thereby allowing the formation of the rearranged membranous structures where viral replication takes place. In terms of biological role, acts as a primer for viral RNA replication and remains covalently bound to viral genomic RNA. VPg is uridylylated prior to priming replication into VPg-pUpU. The oriI viral genomic sequence may act as a template for this. The VPg-pUpU is then used as primer on the genomic RNA poly(A) by the RNA-dependent RNA polymerase to replicate the viral genome. During genome replication, the VPg-RNA linkage is removed by the host TDP2, thereby accelerating replication. During the late stage of the replication cycle, host TDP2 is excluded from sites of viral RNA synthesis and encapsidation, allowing for the generation of progeny virions. Functionally, involved in the viral replication complex and viral polypeptide maturation. It exhibits protease activity with a specificity and catalytic efficiency that is different from protease 3C. Protein 3CD lacks polymerase activity. Protein 3CD binds to the 5'UTR of the viral genome. Major viral protease that mediates proteolytic processing of the polyprotein. Cleaves host EIF5B, contributing to host translation shutoff. Also cleaves host PABPC1, contributing to host translation shutoff. Binds and inhibits host IFIH1/MDA5, thereby inhibiting the type-I IFN production and the establishment of the antiviral state. Cleaves host MAP3K7/TAK1, resulting in inhibition of TRAF6-triggered NF-kappa-B induction. Cleaves host NLRP1, triggers host N-glycine-mediated degradation of the autoinhibitory NLRP1 N-terminal fragment. Its function is as follows. Replicates the viral genomic RNA on the surface of intracellular membranes. May form linear arrays of subunits that propagate along a strong head-to-tail interaction called interface-I. Covalently attaches UMP to a tyrosine of VPg, which is used to prime RNA synthesis. The positive stranded RNA genome is first replicated at virus induced membranous vesicles, creating a dsRNA genomic replication form. This dsRNA is then used as template to synthesize positive stranded RNA genomes. ss(+)RNA genomes are either translated, replicated or encapsidated. In Homo sapiens (Human), this protein is Genome polyprotein.